We begin with the raw amino-acid sequence, 575 residues long: Delta-selinene-like synthase, chloroplastic (575 aa).

Positions 288, 325, 329, 466, and 469 each coordinate (2E,6E)-farnesyl diphosphate. Mg(2+)-binding residues include Asp-325 and Asp-329. Residues 325 to 329 (DDLYD) carry the DDXXD motif motif. Mg(2+) is bound by residues Asp-469 and Glu-477.

The protein belongs to the terpene synthase family. Tpsb subfamily. As to quaternary structure, monomer. It depends on Mg(2+) as a cofactor. Requires Mn(2+) as cofactor.

Its subcellular location is the plastid. It localises to the chloroplast. The enzyme catalyses (2E,6E)-farnesyl diphosphate = (+)-delta-selinene + diphosphate. It participates in secondary metabolite biosynthesis; terpenoid biosynthesis. Its pathway is terpene metabolism; oleoresin biosynthesis. Its function is as follows. Sesquiterpene synthase (sesqui-TPS) involved in the biosynthesis of sesquiterpene natural products. Catalyzes the conversion of (2E)-geranyl diphosphate (GPP) into delta-selinene. The polypeptide is Delta-selinene-like synthase, chloroplastic (Picea sitchensis (Sitka spruce)).